The chain runs to 307 residues: GTPase Era (307 aa).

An Era-type G domain is found at histidine 14 to glutamate 184. Positions glycine 22 to serine 29 are G1. Glycine 22–serine 29 is a GTP binding site. The interval glutamine 48–arginine 52 is G2. Residues aspartate 69–glycine 72 form a G3 region. Residues aspartate 69–leucine 73 and asparagine 131–aspartate 134 contribute to the GTP site. Residues asparagine 131–aspartate 134 are G4. The interval leucine 162–alanine 164 is G5. Residues leucine 215 to proline 292 enclose the KH type-2 domain.

The protein belongs to the TRAFAC class TrmE-Era-EngA-EngB-Septin-like GTPase superfamily. Era GTPase family. In terms of assembly, monomer.

The protein resides in the cytoplasm. It is found in the cell membrane. Functionally, an essential GTPase that binds both GDP and GTP, with rapid nucleotide exchange. Plays a role in 16S rRNA processing and 30S ribosomal subunit biogenesis and possibly also in cell cycle regulation and energy metabolism. The chain is GTPase Era from Deinococcus deserti (strain DSM 17065 / CIP 109153 / LMG 22923 / VCD115).